Here is a 363-residue protein sequence, read N- to C-terminus: Probable protein phosphatase 2C member 13, mitochondrial (363 aa).

The N-terminal 59 residues, 1–59, are a transit peptide targeting the mitochondrion; sequence MVCFASLRRALPLLLRATTTTTPRFLLPRALSGGVGGGAAVDARALLRGHSGWRGLRVA. Residues 111 to 357 form the PPM-type phosphatase domain; that stretch reads KCGYSSFRGK…DNITCIVVQF (247 aa). Residues D147, G148, D309, and D348 each coordinate Mn(2+).

It belongs to the PP2C family. Requires Mg(2+) as cofactor. It depends on Mn(2+) as a cofactor. Highly expressed in mature pollen grains.

Its subcellular location is the mitochondrion. The catalysed reaction is O-phospho-L-seryl-[protein] + H2O = L-seryl-[protein] + phosphate. The enzyme catalyses O-phospho-L-threonyl-[protein] + H2O = L-threonyl-[protein] + phosphate. In terms of biological role, probable protein phosphatase that may play a role as a mitochondrial signal transduction mediator in pollen germination. May function in retrograde signaling from the mitochondria to the nucleus. May be a downstream factor of cytoplasmic male sterility (CMS). CMS is caused by genetic incompatibility between nuclei and mitochondria within male reproductive organs. This is Probable protein phosphatase 2C member 13, mitochondrial from Oryza sativa subsp. japonica (Rice).